Consider the following 345-residue polypeptide: tRNA N6-adenosine threonylcarbamoyltransferase (345 aa).

Fe cation is bound by residues H117 and H121. Substrate is bound by residues 140–144 (LVSGG), D173, G186, and N279. D307 provides a ligand contact to Fe cation.

It belongs to the KAE1 / TsaD family. Fe(2+) is required as a cofactor.

The protein localises to the cytoplasm. It carries out the reaction L-threonylcarbamoyladenylate + adenosine(37) in tRNA = N(6)-L-threonylcarbamoyladenosine(37) in tRNA + AMP + H(+). In terms of biological role, required for the formation of a threonylcarbamoyl group on adenosine at position 37 (t(6)A37) in tRNAs that read codons beginning with adenine. Is involved in the transfer of the threonylcarbamoyl moiety of threonylcarbamoyl-AMP (TC-AMP) to the N6 group of A37, together with TsaE and TsaB. TsaD likely plays a direct catalytic role in this reaction. This chain is tRNA N6-adenosine threonylcarbamoyltransferase, found in Verminephrobacter eiseniae (strain EF01-2).